Reading from the N-terminus, the 198-residue chain is Glycerol-3-phosphate acyltransferase (198 aa).

Transmembrane regions (helical) follow at residues 5 to 25 (LILLSLLAYVIGSIPSGLWIG), 56 to 76 (SIVTVMDILKGTVATLLPFFF), 84 to 104 (FWLLTGAFAIIGHSFPLFAGF), 114 to 134 (AGVILAYAPLLFVAALVVFLV), and 158 to 178 (LFMGDWILIVLVACIALFVIW).

It belongs to the PlsY family. As to quaternary structure, probably interacts with PlsX.

It localises to the cell membrane. It carries out the reaction an acyl phosphate + sn-glycerol 3-phosphate = a 1-acyl-sn-glycero-3-phosphate + phosphate. It participates in lipid metabolism; phospholipid metabolism. Its function is as follows. Catalyzes the transfer of an acyl group from acyl-phosphate (acyl-PO(4)) to glycerol-3-phosphate (G3P) to form lysophosphatidic acid (LPA). This enzyme utilizes acyl-phosphate as fatty acyl donor, but not acyl-CoA or acyl-ACP. The sequence is that of Glycerol-3-phosphate acyltransferase from Listeria monocytogenes serovar 1/2a (strain ATCC BAA-679 / EGD-e).